The following is a 317-amino-acid chain: Olfactory receptor-like protein OLF3 (317 aa).

Residues 1–25 are Extracellular-facing; the sequence is MGTGNQTWVREFVLLGLSSDWDTEV. An N-linked (GlcNAc...) asparagine glycan is attached at Asn-5. Residues 26–49 form a helical membrane-spanning segment; that stretch reads SLFVLFLITYMVTVLGNFLIILLI. Residues 50-57 are Cytoplasmic-facing; sequence RLDSRLHT. A helical transmembrane segment spans residues 58–79; sequence PMYFFLTNLSLVDVSYATSIIP. At 80–100 the chain is on the extracellular side; it reads QMLAHLLAAHKAIPFVSCAAQ. Residues 101-120 form a helical membrane-spanning segment; the sequence is LFFSLGLGGIEFVLLAVMAY. The Cytoplasmic segment spans residues 121-139; the sequence is DRYVAVCDPLRYSVIMHGG. Residues 140 to 158 traverse the membrane as a helical segment; the sequence is LCTRLAITSWVSGSMNSLM. The Extracellular segment spans residues 159–196; sequence QTVITFQLPMCTNKYIDHISCELLAVVRLACVDTSSNE. The chain crosses the membrane as a helical span at residues 197–219; the sequence is IAIMVSSIVLLMTPFCLVLLSYI. The Cytoplasmic portion of the chain corresponds to 220-236; that stretch reads QIISTILKIQSTEGRKK. Residues 237-260 form a helical membrane-spanning segment; sequence AFHTCASHLTVVVLCYGMAIFTYI. Residues 261–272 are Extracellular-facing; it reads QPRSSPSVLQEK. Residues 273–292 traverse the membrane as a helical segment; the sequence is LISLFYSVLTPMLNPMIYSV. The Cytoplasmic segment spans residues 293–317; sequence RNKEVKGAWQKLLGQLTGITSKLAT.

It belongs to the G-protein coupled receptor 1 family.

Its subcellular location is the cell membrane. Putative odorant or sperm cell receptor. This Canis lupus familiaris (Dog) protein is Olfactory receptor-like protein OLF3.